A 364-amino-acid chain; its full sequence is Probable dual-specificity RNA methyltransferase RlmN (364 aa).

The active-site Proton acceptor is the E107. The region spanning 113-346 (HEYGNSVCVT…ATIRREQGSD (234 aa)) is the Radical SAM core domain. A disulfide bridge connects residues C120 and C351. Residues C127, C131, and C134 each contribute to the [4Fe-4S] cluster site. Residues 177–178 (GE), S209, 232–234 (SLH), and N308 each bind S-adenosyl-L-methionine. C351 acts as the S-methylcysteine intermediate in catalysis.

Belongs to the radical SAM superfamily. RlmN family. It depends on [4Fe-4S] cluster as a cofactor.

Its subcellular location is the cytoplasm. It catalyses the reaction adenosine(2503) in 23S rRNA + 2 reduced [2Fe-2S]-[ferredoxin] + 2 S-adenosyl-L-methionine = 2-methyladenosine(2503) in 23S rRNA + 5'-deoxyadenosine + L-methionine + 2 oxidized [2Fe-2S]-[ferredoxin] + S-adenosyl-L-homocysteine. It carries out the reaction adenosine(37) in tRNA + 2 reduced [2Fe-2S]-[ferredoxin] + 2 S-adenosyl-L-methionine = 2-methyladenosine(37) in tRNA + 5'-deoxyadenosine + L-methionine + 2 oxidized [2Fe-2S]-[ferredoxin] + S-adenosyl-L-homocysteine. Specifically methylates position 2 of adenine 2503 in 23S rRNA and position 2 of adenine 37 in tRNAs. Confers resistance to some classes of antibiotics. This is Probable dual-specificity RNA methyltransferase RlmN from Staphylococcus epidermidis (strain ATCC 12228 / FDA PCI 1200).